The sequence spans 502 residues: MSGGLLIAGTTSDAGKSVVTAGICRWLVRQGVKVAPFKAQNMSLNSFVTREGAEIGRAQAMQAQAARVEPTALMNPVLLKPGSDRSSQVVLMGRPVGEMSARGYHGGRQEALLGTVLDCLAELRGTYDAVICEGAGSPAEINLRRTDIVNMGIARNARLPVLVVGDIDRGGVFASFFGTVALLSREDQELVAGFLVNKFRGDVSLLEPGLDMLRNLTGRPSYGVLPFQHGLGIDEEDGLRVSLRGSVRESAVSSPVGEDILRVAVCAIPLMSNFTDVDALAAEPGVVVRFVDRPEELADADLVVIPGTRGTVKALEWLRERGLAEALRRRAAAGRPVLGICGGFQVLGEHIEDDVESRRGHVEGLGLLPVRVRFAREKTLTRPVGEALGEHVEGYEIHHGVADVTGGDPFLDGCRVGAVWGTHWHGSLESDGFRRAFLREVAAAAGRRFVPAAGTSFAGLREEQLDRLGDLIEEHADTDALWRLIESGAPSGLPFIPPGAPA.

The region spanning 260 to 433 (ILRVAVCAIP…WHGSLESDGF (174 aa)) is the GATase cobBQ-type domain. The active-site Nucleophile is the Cys-341. The active site involves His-425.

This sequence belongs to the CobB/CobQ family. CobQ subfamily.

The protein operates within cofactor biosynthesis; adenosylcobalamin biosynthesis. In terms of biological role, catalyzes amidations at positions B, D, E, and G on adenosylcobyrinic A,C-diamide. NH(2) groups are provided by glutamine, and one molecule of ATP is hydrogenolyzed for each amidation. The protein is Cobyric acid synthase of Streptomyces avermitilis (strain ATCC 31267 / DSM 46492 / JCM 5070 / NBRC 14893 / NCIMB 12804 / NRRL 8165 / MA-4680).